A 325-amino-acid polypeptide reads, in one-letter code: 4-diphosphocytidyl-2-C-methyl-D-erythritol kinase (325 aa).

The active site involves Lys-22. 110–120 (PVAGGMAGGSA) serves as a coordination point for ATP. The active site involves Asp-152. The segment at 306–325 (PAPGARVLEAVSTPSPGGRS) is disordered.

The protein belongs to the GHMP kinase family. IspE subfamily.

It carries out the reaction 4-CDP-2-C-methyl-D-erythritol + ATP = 4-CDP-2-C-methyl-D-erythritol 2-phosphate + ADP + H(+). Its pathway is isoprenoid biosynthesis; isopentenyl diphosphate biosynthesis via DXP pathway; isopentenyl diphosphate from 1-deoxy-D-xylulose 5-phosphate: step 3/6. Catalyzes the phosphorylation of the position 2 hydroxy group of 4-diphosphocytidyl-2C-methyl-D-erythritol. In Kineococcus radiotolerans (strain ATCC BAA-149 / DSM 14245 / SRS30216), this protein is 4-diphosphocytidyl-2-C-methyl-D-erythritol kinase.